The chain runs to 302 residues: Myb-related protein Hv33 (302 aa).

HTH myb-type domains are found at residues 11–63 (QPKV…INYL) and 64–118 (RPDL…KKKL). 2 consecutive DNA-binding regions (H-T-H motif) follow at residues 39–63 (WSSV…INYL) and 91–114 (WSQI…NSCI). Positions 137-158 (ATAAAALPDAEEEDRKPLCPAV) are disordered.

As to expression, germinating seed and apical meristem of shoot and root.

Its subcellular location is the nucleus. Its function is as follows. Possible transcription activator in response to an external signal. May be involved in the regulation of flavonoid biosynthesis. The chain is Myb-related protein Hv33 (MYB2) from Hordeum vulgare (Barley).